The sequence spans 314 residues: Probable phytol kinase 1, chloroplastic (314 aa).

The N-terminal 62 residues, 1–62, are a transit peptide targeting the chloroplast; sequence MAAAARPVDV…GVGAAAAPAV (62 aa). 7 helical membrane-spanning segments follow: residues 72-91, 111-131, 135-155, 181-201, 234-254, 266-286, and 294-314; these read AALR…YSLV, IVHV…SNST, FFAA…GLRL, YVIV…IGIV, IGSI…LFYF, LALG…CIPV, and ISVP…SSCC.

The protein belongs to the polyprenol kinase family.

It localises to the plastid. It is found in the chloroplast membrane. The catalysed reaction is phytol + CTP = phytyl phosphate + CDP + H(+). The protein operates within cofactor biosynthesis; tocopherol biosynthesis. Its function is as follows. Involved in the activation and reutilization of phytol from chlorophyll degradation in plant metabolism, including tocopherol biosynthesis. Catalyzes the conversion of phytol to phytol monophosphate (PMP). This is Probable phytol kinase 1, chloroplastic from Oryza sativa subsp. japonica (Rice).